The chain runs to 287 residues: Pantothenate synthetase (287 aa).

ATP is bound at residue 30–37 (MGYLHEGH). The Proton donor role is filled by His37. Residue Gln61 coordinates (R)-pantoate. Residue Gln61 coordinates beta-alanine. Residue 150–153 (GMKD) participates in ATP binding. Residue Gln156 participates in (R)-pantoate binding. ATP is bound by residues Val179 and 187–190 (LSSR).

This sequence belongs to the pantothenate synthetase family. Homodimer.

It localises to the cytoplasm. It carries out the reaction (R)-pantoate + beta-alanine + ATP = (R)-pantothenate + AMP + diphosphate + H(+). Its pathway is cofactor biosynthesis; (R)-pantothenate biosynthesis; (R)-pantothenate from (R)-pantoate and beta-alanine: step 1/1. In terms of biological role, catalyzes the condensation of pantoate with beta-alanine in an ATP-dependent reaction via a pantoyl-adenylate intermediate. This chain is Pantothenate synthetase, found in Coprothermobacter proteolyticus (strain ATCC 35245 / DSM 5265 / OCM 4 / BT).